The chain runs to 550 residues: MANVVVTGEQLDKSIREVVRILEDAVGCTAGPKGLTVAIGKSYGAPEVTKDGYKVIKSIKPEDPLALAIANIITQSASQCNDKVGDGTTTCSILTAKVIEEVSKAKAAGADIVCIKEGVLKAKEAVLEALMSMKREVLSEEEIAQVATISANGDKNIGSKIAQCVQEVGKDGVITVEESKGFKELDVEKTDGMQFDRGYLSPYFVTNSEKMLVEFENPYILLTEKKLNIIQPILPILENVARSGRPLLIIAEDVEGEALSTLVLNKLRGGLHVAAVKAPGFGDRRKDMLGDIAILTGAKHVISDDLAIKMEDLTLAELGTAKNIRITKDTTTIIGSVDNSSANVQSRINQIKMQIEASTSDYDKEKLRERLAKLSGGVAVLKVGGSSEVEVKERKDRVEDALHATRAAVEEGVVPGGGAALLYTLSVLENLKSKNDDEQLGINIVKRALQAPIKRIIKNSGSENAPCVIAHLLKQNDKELIFNVDTMNFANAFTSGVIDPLKVVRIAFDFAVSLAAVFMTLNAIVVDVPSKDDANAGAGGMGGMGGMGGF.

Residues 29-32 (TAGP), K50, 86-90 (DGTTT), G417, and D499 each bind ATP.

The protein belongs to the chaperonin (HSP60) family. Forms a cylinder of 14 subunits composed of two heptameric rings stacked back-to-back. Interacts with the co-chaperonin GroES.

Its subcellular location is the cytoplasm. The enzyme catalyses ATP + H2O + a folded polypeptide = ADP + phosphate + an unfolded polypeptide.. Functionally, together with its co-chaperonin GroES, plays an essential role in assisting protein folding. The GroEL-GroES system forms a nano-cage that allows encapsulation of the non-native substrate proteins and provides a physical environment optimized to promote and accelerate protein folding. This Ehrlichia chaffeensis protein is Chaperonin GroEL.